The chain runs to 215 residues: GTP-binding nuclear protein Ran (215 aa).

Residues 6 to 170 enclose the Small GTPase Ran-type domain; the sequence is DIPTFKLVLV…LWLVRKLLGD (165 aa). Residues 17-24, 35-41, Gly-67, 121-124, and 149-151 each bind GTP; these read DGGTGKTT, EKKYVAT, NFVD, and SAK. The switch-I stretch occupies residues 36 to 44; the sequence is KKYVATLGV. The switch-II stretch occupies residues 67 to 83; it reads GQEKFGGLRDGYYIQGQ. The tract at residues 210–215 is interaction with RANBP1; the sequence is DDDEDL.

The protein belongs to the small GTPase superfamily. Ran family. In terms of assembly, monomer. Interacts with RANGAP1, which promotes RAN-mediated GTP hydrolysis. Interacts with KPNB1. Interaction with KPNB1 inhibits RANGAP1-mediated stimulation of GTPase activity. Interacts with RCC1 which promotes the exchange of RAN-bound GDP by GTP. Interaction with KPNB1 inhibits RCC1-mediated exchange of RAN-bound GDP by GTP. Interacts (GTP-bound form) with TNPO1; the interaction is direct. Interacts with KPNB1 and with TNPO1; both inhibit RAN GTPase activity. Interacts (via C-terminus) with RANBP1, which alleviates the inhibition of RAN GTPase activity. Interacts with RANGRF, which promotes the release of bound guanine nucleotide. RANGRF and RCC1 compete for an overlapping binding site on RAN. Identified in a complex with KPNA2 and CSE1L; interaction with RANBP1 mediates dissociation of RAN from this complex. Interaction with both RANBP1 and KPNA2 promotes dissociation of the complex between RAN and KPNB1. Identified in a complex composed of RAN, RANGAP1 and RANBP1. Identified in a complex that contains TNPO1, RAN and RANBP1. Identified in a nuclear export complex with XPO1. Interaction with RANBP1 or RANBP2 induces a conformation change in the complex formed by XPO1 and RAN that triggers the release of the nuclear export signal of cargo proteins. Component of a nuclear export receptor complex composed of KPNB1, RAN, SNUPN and XPO1. Mg(2+) is required as a cofactor.

The protein localises to the nucleus. The protein resides in the nucleus envelope. Its subcellular location is the cytoplasm. It is found in the cytosol. In terms of biological role, GTPase involved in nucleocytoplasmic transport, participating both to the import and the export from the nucleus of proteins and RNAs. Switches between a cytoplasmic GDP- and a nuclear GTP-bound state by nucleotide exchange and GTP hydrolysis. Nuclear import receptors such as importin beta bind their substrates only in the absence of GTP-bound RAN and release them upon direct interaction with GTP-bound RAN, while export receptors behave in the opposite way. Thereby, RAN controls cargo loading and release by transport receptors in the proper compartment and ensures the directionality of the transport. Interaction with RANBP1 induces a conformation change in the complex formed by XPO1 and RAN that triggers the release of the nuclear export signal of cargo proteins. RAN (GTP-bound form) triggers microtubule assembly at mitotic chromosomes and is required for normal mitotic spindle assembly and chromosome segregation. Required for normal progress through mitosis. The protein is GTP-binding nuclear protein Ran (ran-1) of Onchocerca volvulus.